An 882-amino-acid chain; its full sequence is DNA mismatch repair protein MutS (882 aa).

656 to 663 (GPNASGKS) provides a ligand contact to ATP.

It belongs to the DNA mismatch repair MutS family.

Functionally, this protein is involved in the repair of mismatches in DNA. It is possible that it carries out the mismatch recognition step. This protein has a weak ATPase activity. The protein is DNA mismatch repair protein MutS of Synechococcus elongatus (strain ATCC 33912 / PCC 7942 / FACHB-805) (Anacystis nidulans R2).